We begin with the raw amino-acid sequence, 526 residues long: Probable Xaa-Pro aminopeptidase MGG_05684 (526 aa).

Residues Asp-285, Asp-296, Glu-447, and Glu-488 each contribute to the Mn(2+) site.

Belongs to the peptidase M24B family. Requires Mn(2+) as cofactor.

The enzyme catalyses Release of any N-terminal amino acid, including proline, that is linked to proline, even from a dipeptide or tripeptide.. Catalyzes the removal of a penultimate prolyl residue from the N-termini of peptides. The protein is Probable Xaa-Pro aminopeptidase MGG_05684 of Pyricularia oryzae (strain 70-15 / ATCC MYA-4617 / FGSC 8958) (Rice blast fungus).